The sequence spans 485 residues: Cysteine--tRNA ligase (485 aa).

Cys-27 lines the Zn(2+) pocket. The short motif at 29-39 (ITAYDLCHIGH) is the 'HIGH' region element. Positions 208, 233, and 237 each coordinate Zn(2+). Positions 265–269 (KMSKS) match the 'KMSKS' region motif. Lys-268 is a binding site for ATP.

The protein belongs to the class-I aminoacyl-tRNA synthetase family. As to quaternary structure, monomer. The cofactor is Zn(2+).

Its subcellular location is the cytoplasm. It catalyses the reaction tRNA(Cys) + L-cysteine + ATP = L-cysteinyl-tRNA(Cys) + AMP + diphosphate. The chain is Cysteine--tRNA ligase from Nitratidesulfovibrio vulgaris (strain DP4) (Desulfovibrio vulgaris).